The primary structure comprises 541 residues: tRNA uridine(34) acetyltransferase (541 aa).

Residues 76–336 (KPVRTISGVA…GEYKPYREEE (261 aa)) form a radical S-adenosyl-L-methionine (rSAM) region. Residues 79-350 (RTISGVAVVA…ISYAKSIMPK (272 aa)) form the Radical SAM core domain. [4Fe-4S] cluster-binding residues include C96, C101, and C104. Residues K156, 467–470 (QLHV), 491–493 (YGR), and Y524 contribute to the acetyl-CoA site. Positions 401–541 (VMYKKGIMPD…VGAYMGKYLE (141 aa)) constitute an N-acetyltransferase domain.

The protein belongs to the ELP3 family. [4Fe-4S] cluster is required as a cofactor.

The enzyme catalyses uridine(34) in tRNA + acetyl-CoA + S-adenosyl-L-methionine + H2O = 5-(carboxymethyl)uridine(34) in tRNA + 5'-deoxyadenosine + L-methionine + CoA + 2 H(+). Its pathway is tRNA modification. Its function is as follows. tRNA uridine(34) acetyltransferase, which mediates formation of carboxymethyluridine in the wobble base at position 34 in tRNAs. The proposed mechanism is the following: (i) recruits S-adenosyl-L-methionine and cleaves it to generate a 5'-deoxyadenosine radical (5'-dA) in the radical S-adenosyl-L-methionine (rSAM) region, (ii) hydrolyzes acetyl-CoA in the N-acetyltransferase domain and (iii) an acetyl radical is formed by the products of the two domains and (iv) is transferred onto the C5 position of uridine(34) in the bound tRNA molecule. Does not show protein lysine acetyltransferase activity. This Methanocaldococcus jannaschii (strain ATCC 43067 / DSM 2661 / JAL-1 / JCM 10045 / NBRC 100440) (Methanococcus jannaschii) protein is tRNA uridine(34) acetyltransferase.